The primary structure comprises 503 residues: Ferulic acid decarboxylase 1 (503 aa).

The Mn(2+) site is built by Asn-170, His-193, and Glu-236. Residues 170–175 (NWSIAR), 192–193 (QH), and Glu-236 contribute to the prenylated FMN site. Residue Glu-285 is the Proton donor of the active site. Residue Lys-394 coordinates prenylated FMN.

Belongs to the UbiD family. UbiD-like/FDC subfamily. As to quaternary structure, homodimer. May form higher order oligomers. Requires Mn(2+) as cofactor. Prenylated FMN is required as a cofactor.

The protein resides in the cytoplasm. It carries out the reaction (E)-4-coumarate + H(+) = 4-vinylphenol + CO2. The enzyme catalyses (E)-cinnamate + H(+) = styrene + CO2. It catalyses the reaction (E)-ferulate + H(+) = 2-methoxy-4-vinylphenol + CO2. Functionally, catalyzes the reversible decarboxylation of aromatic carboxylic acids like ferulic acid, p-coumaric acid or cinnamic acid, producing the corresponding vinyl derivatives 4-vinylphenol, 4-vinylguaiacol, and styrene, respectively, which play the role of aroma metabolites. Not essential for ubiquinone synthesis. The sequence is that of Ferulic acid decarboxylase 1 from Saccharomyces cerevisiae (strain ATCC 204508 / S288c) (Baker's yeast).